Consider the following 74-residue polypeptide: Ferredoxin MycCII (74 aa).

In terms of domain architecture, 4Fe-4S ferredoxin-type spans 1-29; it reads MRIVLDAERCVGAGQCEATAPELFTQGDD. The [3Fe-4S] cluster site is built by cysteine 10, cysteine 16, and cysteine 54.

The cofactor is [3Fe-4S] cluster.

It participates in antibiotic biosynthesis; mycinamicin biosynthesis. In terms of biological role, specific electron transport protein capable of effectively supporting cytochrome P450 MycCI activity in the biosynthesis of mycinamicin, a 16-membered macrolide antibiotic. This Micromonospora griseorubida protein is Ferredoxin MycCII.